Reading from the N-terminus, the 136-residue chain is Protein NrdI (136 aa).

This sequence belongs to the NrdI family.

Probably involved in ribonucleotide reductase function. The polypeptide is Protein NrdI (Salmonella newport (strain SL254)).